Consider the following 115-residue polypeptide: NADH-ubiquinone oxidoreductase chain 3 (115 aa).

3 helical membrane passes run 3-23, 55-75, and 87-107; these read LFIM…LNLL, FFMV…LLPL, and TITW…YEWL.

This sequence belongs to the complex I subunit 3 family.

It is found in the mitochondrion membrane. The catalysed reaction is a ubiquinone + NADH + 5 H(+)(in) = a ubiquinol + NAD(+) + 4 H(+)(out). Functionally, core subunit of the mitochondrial membrane respiratory chain NADH dehydrogenase (Complex I) that is believed to belong to the minimal assembly required for catalysis. Complex I functions in the transfer of electrons from NADH to the respiratory chain. The immediate electron acceptor for the enzyme is believed to be ubiquinone. The polypeptide is NADH-ubiquinone oxidoreductase chain 3 (MT-ND3) (Alligator mississippiensis (American alligator)).